The primary structure comprises 75 residues: Large ribosomal subunit protein bL31 (75 aa).

Positions 16, 18, 37, and 40 each coordinate Zn(2+).

It belongs to the bacterial ribosomal protein bL31 family. Type A subfamily. In terms of assembly, part of the 50S ribosomal subunit. Zn(2+) is required as a cofactor.

Binds the 23S rRNA. The polypeptide is Large ribosomal subunit protein bL31 (Pseudomonas syringae pv. tomato (strain ATCC BAA-871 / DC3000)).